The chain runs to 332 residues: UPF0194 membrane protein YbhG (332 aa).

The first 16 residues, 1–16 (MMKKPVVIGLAVVVLA), serve as a signal peptide directing secretion. Positions 107 to 209 (NEEIAQAAAA…LNLQDSTLIA (103 aa)) form a coiled coil.

Belongs to the UPF0194 family.

The protein resides in the periplasm. This Escherichia coli (strain K12 / MC4100 / BW2952) protein is UPF0194 membrane protein YbhG.